A 192-amino-acid polypeptide reads, in one-letter code: MNYQIKRNTEETQLNISLANNGTQSHINTGVGFLDHMLTLFTFHSGLTLSIEATGDTYVDDHHITEDIGIVIGQLLLELVKTQQSFTRYGCSYVPMDETLARTVVDISGRPYFSFNSKLSAQKVGTFDTELVEEFFRALVINARLTVHIDLLRGGNTHHEIEAIFKSFARALKISLAQNEDGRIPSSKGVIE.

Belongs to the imidazoleglycerol-phosphate dehydratase family.

It is found in the cytoplasm. The catalysed reaction is D-erythro-1-(imidazol-4-yl)glycerol 3-phosphate = 3-(imidazol-4-yl)-2-oxopropyl phosphate + H2O. It participates in amino-acid biosynthesis; L-histidine biosynthesis; L-histidine from 5-phospho-alpha-D-ribose 1-diphosphate: step 6/9. This chain is Imidazoleglycerol-phosphate dehydratase, found in Staphylococcus epidermidis (strain ATCC 12228 / FDA PCI 1200).